Reading from the N-terminus, the 208-residue chain is Ribosomal RNA small subunit methyltransferase G (208 aa).

Residues G75, L80, 126-127 (VE), and R141 each bind S-adenosyl-L-methionine.

The protein belongs to the methyltransferase superfamily. RNA methyltransferase RsmG family.

The protein resides in the cytoplasm. It carries out the reaction guanosine(527) in 16S rRNA + S-adenosyl-L-methionine = N(7)-methylguanosine(527) in 16S rRNA + S-adenosyl-L-homocysteine. Functionally, specifically methylates the N7 position of guanine in position 527 of 16S rRNA. The sequence is that of Ribosomal RNA small subunit methyltransferase G from Marinomonas sp. (strain MWYL1).